A 2193-amino-acid chain; its full sequence is Non-reducing polyketide synthase esdpA (2193 aa).

The 163-residue stretch at 90-252 (NVLLAPLTVL…AKVQVNGRYH (163 aa)) folds into the Starter acyltransferase (SAT) domain. A Ketosynthase family 3 (KS3) domain is found at 381 to 797 (DECVAIVGAA…GNNTVIIVCE (417 aa)). Residues Cys546, His682, and His720 each act as for beta-ketoacyl synthase activity in the active site. Residues 906 to 1158 (VFSGQSGMTV…YFVDAVRRIK (253 aa)) enclose the Malonyl-CoA:ACP transacylase (MAT) domain. Ser992 functions as the For acyl/malonyl transferase activity in the catalytic mechanism. The segment at 1265 to 1392 (PPMLSLENFS…GRVVLEDRRR (128 aa)) is N-terminal hotdog fold. A PKS/mFAS DH domain is found at 1265-1569 (PPMLSLENFS…FVKISSHILQ (305 aa)). The interval 1419–1569 (VFSASGSIAY…FVKISSHILQ (151 aa)) is C-terminal hotdog fold. Asp1479 acts as the Proton donor; for dehydratase activity in catalysis. The 77-residue stretch at 1723-1799 (RILSDSMIKL…ELHDLMQSHP (77 aa)) folds into the Carrier domain. An O-(pantetheine 4'-phosphoryl)serine modification is found at Ser1759. Residues 1944-2177 (YHGSEHKLLR…GFTHVDWSND (234 aa)) are methyltransferase (CMeT) domain.

The cofactor is pantetheine 4'-phosphate.

The protein operates within secondary metabolite biosynthesis; terpenoid biosynthesis. In terms of biological role, non-reducing polyketide synthase; part of the cluster that mediates the biosynthesis of shearones, diterpenoid pyrones (DPs) which are structurally diverse meroterpenoids consisting of a diterpene linked by a pyrone, and which may exhibit a range of bioactivities. Whitin the pathway, esdpA takes part to the biosynthesis of the molecular scaffold via the production of the alpha-pyrone from one molecule of acetyl-CoA, two molecules of malonyl-CoA and one molecule of S-adenosyl-L-methionine (SAM). The molecular scaffold is commonly biosynthesized by a series of enzymes including the non-reducing polyketide synthase (NR-PKS) esdpA that generates an alpha-pyrone; the prenyltransferase esdpC that attaches a geranylgeranyl pyrophosphate (GGPP) produced by the GGPP synthase (GGPPS) esdpD onto the pyrone unit; the FAD-dependent monooxygenase esdpE that converts an olefin on the diterpene unit into an epoxide; and the terpene cyclase esdpB that catalyzes the cyclization reactions to give the molecular backbone shearone A. In the modification steps, esdpF oxidizes the hydroxy group to a ketone at C-3 and esdpG then attaches hydroxy groups at both C-11 and C-12. After that, esdpI hydroxylates at C-20 and esdpH hydroxylates at C-6'. The ether bridge is generated by nucleophilic attack of the hydroxy group at C-20 to the carbonyl carbon at C-3. EsdpH can also functions prior to esdpI. The different combinations of these modification enzymes lead to the production of diverse shearone derivatives, shearone I being the end product of the pathway. The alpha-ketoglutarate-dependent dioxygenase esdpJ seems not to be involved in this pathway. This chain is Non-reducing polyketide synthase esdpA, found in Penicillium shearii (Eupenicillium shearii).